An 858-amino-acid polypeptide reads, in one-letter code: Alanine--tRNA ligase (858 aa).

Zn(2+) contacts are provided by histidine 550, histidine 554, cysteine 652, and histidine 656.

This sequence belongs to the class-II aminoacyl-tRNA synthetase family. It depends on Zn(2+) as a cofactor.

Its subcellular location is the cytoplasm. It catalyses the reaction tRNA(Ala) + L-alanine + ATP = L-alanyl-tRNA(Ala) + AMP + diphosphate. In terms of biological role, catalyzes the attachment of alanine to tRNA(Ala) in a two-step reaction: alanine is first activated by ATP to form Ala-AMP and then transferred to the acceptor end of tRNA(Ala). Also edits incorrectly charged Ser-tRNA(Ala) and Gly-tRNA(Ala) via its editing domain. In Pseudothermotoga lettingae (strain ATCC BAA-301 / DSM 14385 / NBRC 107922 / TMO) (Thermotoga lettingae), this protein is Alanine--tRNA ligase.